The primary structure comprises 494 residues: Histidine--tRNA ligase (494 aa).

Positions 1 to 20 (MAKDQKKQPRPKAETPKGFR) are disordered.

Belongs to the class-II aminoacyl-tRNA synthetase family. As to quaternary structure, homodimer.

The protein resides in the cytoplasm. It carries out the reaction tRNA(His) + L-histidine + ATP = L-histidyl-tRNA(His) + AMP + diphosphate + H(+). The polypeptide is Histidine--tRNA ligase (Paracoccus denitrificans (strain Pd 1222)).